The sequence spans 520 residues: Cytochrome b5 reductase 4 (520 aa).

Met1 carries the post-translational modification N-acetylmethionine. The segment covering Met1–Gln16 has biased composition (low complexity). The segment at Met1–Pro27 is disordered. A Cytochrome b5 heme-binding domain is found at Leu54 to Ala130. Positions 89 and 112 each coordinate heme. The CS domain maps to Pro164–Gly255. The FAD-binding FR-type domain maps to Leu272–Ser384. Residues Asp364–Gly379 and Asp391–Leu423 contribute to the FAD site.

Belongs to the flavoprotein pyridine nucleotide cytochrome reductase family. The cofactor is FAD.

The protein resides in the endoplasmic reticulum. The enzyme catalyses 2 Fe(III)-[cytochrome b5] + NADH = 2 Fe(II)-[cytochrome b5] + NAD(+) + H(+). Functionally, NADH-cytochrome b5 reductase involved in endoplasmic reticulum stress response pathway. Plays a critical role in protecting pancreatic beta-cells against oxidant stress, possibly by protecting the cell from excess buildup of reactive oxygen species (ROS). In Bos taurus (Bovine), this protein is Cytochrome b5 reductase 4 (CYB5R4).